The sequence spans 74 residues: MSRRVILTLVLVTILVKTMAGMESKKVETTDEIKKRSGTSEKERESGRLLGVVKRLIVCFRSPFPGRRAISEQT.

The N-terminal stretch at Met-1 to Gly-21 is a signal peptide. Residues Met-22–Ile-33 constitute a propeptide that is removed on maturation. Pro-65 is subject to Proline amide. Positions Ala-69–Thr-74 are excised as a propeptide.

This sequence belongs to the non-disulfide-bridged peptide (NDBP) superfamily. Medium-length antimicrobial peptide (group 3) family. In terms of tissue distribution, expressed by the venom gland.

It localises to the secreted. The protein resides in the target cell membrane. Its function is as follows. Possesses antimicrobial activity against both Gram-negative (MIC=23.8-51.2 uM) and Gram-positive (MIC=11.8-46.5 uM) bacteria, as well as against the fungus C.tropicalis (MIC=48.6 uM). Also possesses a relatively high hemolytic activity. May act by disrupting the integrity of the bacterial cell membrane. The sequence is that of Antimicrobial peptide HsAp1 from Heterometrus spinifer (Asia giant forest scorpion).